The primary structure comprises 211 residues: N-(5'-phosphoribosyl)anthranilate isomerase (211 aa).

This sequence belongs to the TrpF family.

It catalyses the reaction N-(5-phospho-beta-D-ribosyl)anthranilate = 1-(2-carboxyphenylamino)-1-deoxy-D-ribulose 5-phosphate. It functions in the pathway amino-acid biosynthesis; L-tryptophan biosynthesis; L-tryptophan from chorismate: step 3/5. This is N-(5'-phosphoribosyl)anthranilate isomerase from Nitrosomonas europaea (strain ATCC 19718 / CIP 103999 / KCTC 2705 / NBRC 14298).